We begin with the raw amino-acid sequence, 151 residues long: UPF0178 protein Ping_0754 (151 aa).

This sequence belongs to the UPF0178 family.

The sequence is that of UPF0178 protein Ping_0754 from Psychromonas ingrahamii (strain DSM 17664 / CCUG 51855 / 37).